The chain runs to 1184 residues: DNA-directed RNA polymerase subunit beta (1184 aa).

A disordered region spans residues 1160 to 1184 (DDDFTNQNDAFNIVQPENAATEKTE).

The protein belongs to the RNA polymerase beta chain family. In terms of assembly, the RNAP catalytic core consists of 2 alpha, 1 beta, 1 beta' and 1 omega subunit. When a sigma factor is associated with the core the holoenzyme is formed, which can initiate transcription.

The enzyme catalyses RNA(n) + a ribonucleoside 5'-triphosphate = RNA(n+1) + diphosphate. DNA-dependent RNA polymerase catalyzes the transcription of DNA into RNA using the four ribonucleoside triphosphates as substrates. This Listeria innocua serovar 6a (strain ATCC BAA-680 / CLIP 11262) protein is DNA-directed RNA polymerase subunit beta.